The chain runs to 591 residues: Aspartate--tRNA(Asp/Asn) ligase (591 aa).

Glu176 contacts L-aspartate. An aspartate region spans residues 200–203 (QLFK). Arg222 contributes to the L-aspartate binding site. ATP contacts are provided by residues 222–224 (RDE) and Gln231. Residue His450 coordinates L-aspartate. Glu484 lines the ATP pocket. Arg491 is an L-aspartate binding site. 536-539 (GLDR) serves as a coordination point for ATP.

It belongs to the class-II aminoacyl-tRNA synthetase family. Type 1 subfamily. As to quaternary structure, homodimer.

Its subcellular location is the cytoplasm. It carries out the reaction tRNA(Asx) + L-aspartate + ATP = L-aspartyl-tRNA(Asx) + AMP + diphosphate. Functionally, aspartyl-tRNA synthetase with relaxed tRNA specificity since it is able to aspartylate not only its cognate tRNA(Asp) but also tRNA(Asn). Reaction proceeds in two steps: L-aspartate is first activated by ATP to form Asp-AMP and then transferred to the acceptor end of tRNA(Asp/Asn). The chain is Aspartate--tRNA(Asp/Asn) ligase from Bacillus cereus (strain ATCC 14579 / DSM 31 / CCUG 7414 / JCM 2152 / NBRC 15305 / NCIMB 9373 / NCTC 2599 / NRRL B-3711).